Consider the following 229-residue polypeptide: Peptidase E (229 aa).

Active-site charge relay system residues include Ser120, Asp135, and His157.

The protein belongs to the peptidase S51 family.

The protein localises to the cytoplasm. It carries out the reaction Dipeptidase E catalyzes the hydrolysis of dipeptides Asp-|-Xaa. It does not act on peptides with N-terminal Glu, Asn or Gln, nor does it cleave isoaspartyl peptides.. Hydrolyzes dipeptides containing N-terminal aspartate residues. May play a role in allowing the cell to use peptide aspartate to spare carbon otherwise required for the synthesis of the aspartate family of amino acids. The polypeptide is Peptidase E (Salmonella typhi).